Consider the following 361-residue polypeptide: SUN domain-containing protein 3 (361 aa).

Residues 1 to 47 (MSGKAKARRAAMFFRGCSEDASGSTSGSTLLSEDENPDTNGVTRSWK) are Nuclear-facing. The disordered stretch occupies residues 19–38 (EDASGSTSGSTLLSEDENPD). Low complexity predominate over residues 22–31 (SGSTSGSTLL). The chain crosses the membrane as a helical span at residues 48–69 (IILSTMFTLTFLLVGLLSHQWL). The Perinuclear space segment spans residues 70–361 (KETEVPQKSR…RVHGTPGKHI (292 aa)). Residues 103 to 129 (KEQLELLKKESQTLENNFHKILLLIEQ) are a coiled coil. The region spanning 197–358 (GASIIEAGTS…YRFRVHGTPG (162 aa)) is the SUN domain.

As to quaternary structure, self-associates. Interacts with SYNE1 and SPAG4/SUN4. Proposed to form a spermatogenesis-specific LINC complex with SYNE1 during sperm head formation possibly implicating a SUN domain-based heterotrimer with SPAG4/SUN4 associating with SYNE1.

It localises to the membrane. The protein resides in the nucleus envelope. Its subcellular location is the nucleus inner membrane. As a probable component of the LINC (LInker of Nucleoskeleton and Cytoskeleton) complex, involved in the connection between the nuclear lamina and the cytoskeleton. The nucleocytoplasmic interactions established by the LINC complex play an important role in the transmission of mechanical forces across the nuclear envelope and in nuclear movement and positioning. May be involved in nuclear remodeling during sperm head formation in spermatogenesis. A probable SUN3:SYNE1 LINC complex may tether spermatid nuclei to posterior cytoskeletal structures such as the manchette. The polypeptide is SUN domain-containing protein 3 (SUN3) (Macaca fascicularis (Crab-eating macaque)).